We begin with the raw amino-acid sequence, 160 residues long: Endoribonuclease YbeY (160 aa).

Zn(2+) contacts are provided by H112, H116, and H122. Positions 141-160 (ELGHPDPYACDDEEPPSKEK) are disordered.

It belongs to the endoribonuclease YbeY family. Requires Zn(2+) as cofactor.

It localises to the cytoplasm. Functionally, single strand-specific metallo-endoribonuclease involved in late-stage 70S ribosome quality control and in maturation of the 3' terminus of the 16S rRNA. This is Endoribonuclease YbeY from Pseudomonas aeruginosa (strain UCBPP-PA14).